A 321-amino-acid chain; its full sequence is L-Ala-D/L-Glu epimerase (321 aa).

Substrate is bound by residues Thr124 and Lys149. The Proton acceptor; specific for (R)-substrate epimerization role is filled by Lys151. Mg(2+)-binding residues include Asp176, Glu202, and Asp225. The Proton acceptor; specific for (S)-substrate epimerization role is filled by Lys247. Cys275, Asp297, and Asp299 together coordinate substrate.

This sequence belongs to the mandelate racemase/muconate lactonizing enzyme family. Monomer. Requires Mg(2+) as cofactor.

The catalysed reaction is L-alanyl-L-glutamate = L-alanyl-D-glutamate. It participates in cell wall biogenesis; peptidoglycan recycling. In terms of biological role, catalyzes the epimerization of L-Ala-D-Glu to L-Ala-L-Glu and has a role in the recycling of the murein peptide, of which L-Ala-D-Glu is a component. Is also able to catalyze the reverse reaction and the epimerization of all the L-Ala-X dipeptides, except L-Ala-L-Arg, L-Ala-L-Lys and L-Ala-L-Pro. Is also active with L-Gly-L-Glu, L-Phe-L-Glu, and L-Ser-L-Glu, but not with L-Glu-L-Glu, L-Lys-L-Glu, L-Pro-L-Glu, L-Lys-L-Ala, or D-Ala-D-Ala. The protein is L-Ala-D/L-Glu epimerase (ycjG) of Escherichia coli (strain K12).